A 340-amino-acid polypeptide reads, in one-letter code: Ketol-acid reductoisomerase (NADP(+)) (340 aa).

Residues 2–181 (VKMYYEADVK…GCTKAGVIET (180 aa)) form the KARI N-terminal Rossmann domain. NADP(+)-binding positions include 25 to 28 (YGSQ), R48, S52, and 82 to 85 (DERQ). The active site involves H107. G133 provides a ligand contact to NADP(+). The 146-residue stretch at 182-327 (SFREETETDL…EQLRGMMSWI (146 aa)) folds into the KARI C-terminal knotted domain. Mg(2+) is bound by residues D190, E194, E226, and E230. A substrate-binding site is contributed by S251.

It belongs to the ketol-acid reductoisomerase family. It depends on Mg(2+) as a cofactor.

The enzyme catalyses (2R)-2,3-dihydroxy-3-methylbutanoate + NADP(+) = (2S)-2-acetolactate + NADPH + H(+). It catalyses the reaction (2R,3R)-2,3-dihydroxy-3-methylpentanoate + NADP(+) = (S)-2-ethyl-2-hydroxy-3-oxobutanoate + NADPH + H(+). Its pathway is amino-acid biosynthesis; L-isoleucine biosynthesis; L-isoleucine from 2-oxobutanoate: step 2/4. It functions in the pathway amino-acid biosynthesis; L-valine biosynthesis; L-valine from pyruvate: step 2/4. In terms of biological role, involved in the biosynthesis of branched-chain amino acids (BCAA). Catalyzes an alkyl-migration followed by a ketol-acid reduction of (S)-2-acetolactate (S2AL) to yield (R)-2,3-dihydroxy-isovalerate. In the isomerase reaction, S2AL is rearranged via a Mg-dependent methyl migration to produce 3-hydroxy-3-methyl-2-ketobutyrate (HMKB). In the reductase reaction, this 2-ketoacid undergoes a metal-dependent reduction by NADPH to yield (R)-2,3-dihydroxy-isovalerate. The sequence is that of Ketol-acid reductoisomerase (NADP(+)) from Brevibacillus brevis (strain 47 / JCM 6285 / NBRC 100599).